The chain runs to 1869 residues: Chitin synthase csm1 (1869 aa).

In terms of domain architecture, Myosin motor spans 1–778 (MAQHRCVGGN…CWMEIAQLSD (778 aa)). An ATP-binding site is contributed by 103 to 110 (GESGSGKT). Residues N122, N290, N427, and N558 are each glycosylated (N-linked (GlcNAc...) asparagine). Positions 579–653 (HPQERTTVMQ…KPSEEGASGQ (75 aa)) are disordered. Polar residues predominate over residues 583 to 593 (RTTVMQASVSS). The segment at 658–682 (LDNVTKSFHAQNTNAYFVFCLKPND) is actin-binding. N660 is a glycosylation site (N-linked (GlcNAc...) asparagine). 2 consecutive transmembrane segments (helical) span residues 880 to 900 (WVFI…QHLG) and 919 to 939 (FIIW…PMLV). 3 N-linked (GlcNAc...) asparagine glycosylation sites follow: N1029, N1054, and N1120. The chain crosses the membrane as a helical span at residues 1191 to 1211 (FILAVTIILCSIIAFKFFAAL). Residues N1448 and N1554 are each glycosylated (N-linked (GlcNAc...) asparagine). The next 3 membrane-spanning stretches (helical) occupy residues 1579–1599 (FIVF…AYIV), 1612–1632 (VPVL…IIFI), and 1639–1659 (MIAW…GLPL). In terms of domain architecture, DEK-C spans 1811–1866 (LPSDDALLAEIREILRTADLMTVTKKGVKQELERRFGVNLDSRRAYINSATEALLS).

The protein in the N-terminal section; belongs to the TRAFAC class myosin-kinesin ATPase superfamily. Myosin family. It in the C-terminal section; belongs to the chitin synthase family. Class V subfamily.

It localises to the cell membrane. The protein localises to the cell septum. The protein resides in the cell tip. The catalysed reaction is [(1-&gt;4)-N-acetyl-beta-D-glucosaminyl](n) + UDP-N-acetyl-alpha-D-glucosamine = [(1-&gt;4)-N-acetyl-beta-D-glucosaminyl](n+1) + UDP + H(+). Its function is as follows. Polymerizes chitin, a structural polymer of the cell wall and septum, by transferring the sugar moiety of UDP-GlcNAc to the non-reducing end of the growing chitin polymer. Involved in mycelial growth. The protein is Chitin synthase csm1 of Pyricularia grisea (Crabgrass-specific blast fungus).